The chain runs to 115 residues: NADH-ubiquinone oxidoreductase chain 3 (115 aa).

Helical transmembrane passes span 3 to 23, 55 to 75, and 84 to 104; these read VMLALLTNTLLSTLLVLIAFW, FFLVAITFLLFDLEIALLLPL, and LPTMLTMALLLISLLAASLAY.

Belongs to the complex I subunit 3 family. Core subunit of respiratory chain NADH dehydrogenase (Complex I) which is composed of 45 different subunits. Interacts with TMEM186. Interacts with TMEM242.

Its subcellular location is the mitochondrion inner membrane. It carries out the reaction a ubiquinone + NADH + 5 H(+)(in) = a ubiquinol + NAD(+) + 4 H(+)(out). Its function is as follows. Core subunit of the mitochondrial membrane respiratory chain NADH dehydrogenase (Complex I) which catalyzes electron transfer from NADH through the respiratory chain, using ubiquinone as an electron acceptor. Essential for the catalytic activity of complex I. The chain is NADH-ubiquinone oxidoreductase chain 3 from Felis catus (Cat).